We begin with the raw amino-acid sequence, 335 residues long: Cathepsin B (335 aa).

A signal peptide spans 1 to 17 (MWRLLATLSCLVLLTSA). The propeptide at 18 to 79 (RESLHFQPLS…QRAAFAADMI (62 aa)) is activation peptide. 6 cysteine pairs are disulfide-bonded: cysteine 93–cysteine 122, cysteine 105–cysteine 150, cysteine 141–cysteine 207, cysteine 142–cysteine 146, cysteine 179–cysteine 211, and cysteine 187–cysteine 198. The active site involves cysteine 108. N-linked (GlcNAc...) asparagine glycosylation is present at asparagine 192. At lysine 220 the chain carries N6-acetyllysine. A disulfide bond links cysteine 227 and cysteine 331. Active-site residues include histidine 278 and asparagine 298. Residues 333-335 (PHF) constitute a propeptide that is removed on maturation.

Belongs to the peptidase C1 family. As to quaternary structure, dimer of a heavy chain and a light chain cross-linked by a disulfide bond. Interacts with SRPX2. Directly interacts with SHKBP1. In terms of tissue distribution, expressed in heart (at protein level).

The protein localises to the lysosome. It localises to the melanosome. It is found in the secreted. Its subcellular location is the extracellular space. The protein resides in the apical cell membrane. It carries out the reaction Hydrolysis of proteins with broad specificity for peptide bonds. Preferentially cleaves -Arg-Arg-|-Xaa bonds in small molecule substrates (thus differing from cathepsin L). In addition to being an endopeptidase, shows peptidyl-dipeptidase activity, liberating C-terminal dipeptides.. Functionally, thiol protease which is believed to participate in intracellular degradation and turnover of proteins. Cleaves matrix extracellular phosphoglycoprotein MEPE. Involved in the solubilization of cross-linked TG/thyroglobulin in the thyroid follicle lumen. Has also been implicated in tumor invasion and metastasis. In Sus scrofa (Pig), this protein is Cathepsin B (CTSB).